Consider the following 67-residue polypeptide: Conotoxin Lt5.9 (67 aa).

Positions 1–19 (MLCLPVFIILLLLASPAAP) are cleaved as a signal peptide. The propeptide occupies 20 to 46 (KSFETKVQSDLTRTDGNMETEENLGEV).

This sequence belongs to the conotoxin T superfamily. In terms of processing, contains 2 disulfide bonds that can be either 'C1-C3, C2-C4' or 'C1-C4, C2-C3', since these disulfide connectivities have been observed for conotoxins with cysteine framework V (for examples, see AC P0DQQ7 and AC P81755). Expressed by the venom duct.

It is found in the secreted. The protein is Conotoxin Lt5.9 of Conus litteratus (Lettered cone).